A 173-amino-acid chain; its full sequence is MAKRRKGNREKEKETTWQERVIQIRRVSKVVKGGKKLSFRAIVVVGNENGQVGVGVGKAGDVIGAVRKGVADGKKQLIEVSLTKASSITHLTRGASGGAQVIMRPAAPGTGVIAGGAVRTVLELAGVKNILAKQLGSDNPLNNARAAVNALETLRTFSEVAKDRGVSIEHLYT.

One can recognise an S5 DRBM domain in the interval 17–80 (WQERVIQIRR…ADGKKQLIEV (64 aa)).

Belongs to the universal ribosomal protein uS5 family. In terms of assembly, part of the 30S ribosomal subunit. Contacts proteins S4 and S8.

In terms of biological role, with S4 and S12 plays an important role in translational accuracy. Its function is as follows. Located at the back of the 30S subunit body where it stabilizes the conformation of the head with respect to the body. In Microcystis aeruginosa (strain NIES-843 / IAM M-2473), this protein is Small ribosomal subunit protein uS5.